The primary structure comprises 406 residues: Multifunctional CCA protein (406 aa).

Residues Gly8 and Arg11 each contribute to the ATP site. 2 residues coordinate CTP: Gly8 and Arg11. Mg(2+) contacts are provided by Asp21 and Asp23. ATP-binding residues include Arg91, Arg137, and Arg140. Positions 91, 137, and 140 each coordinate CTP. The HD domain maps to 228–329 (TGIHTLMVAE…IKILNKFDVW (102 aa)).

This sequence belongs to the tRNA nucleotidyltransferase/poly(A) polymerase family. Bacterial CCA-adding enzyme type 1 subfamily. As to quaternary structure, monomer. Can also form homodimers and oligomers. Requires Mg(2+) as cofactor. It depends on Ni(2+) as a cofactor.

The enzyme catalyses a tRNA precursor + 2 CTP + ATP = a tRNA with a 3' CCA end + 3 diphosphate. The catalysed reaction is a tRNA with a 3' CCA end + 2 CTP + ATP = a tRNA with a 3' CCACCA end + 3 diphosphate. Its function is as follows. Catalyzes the addition and repair of the essential 3'-terminal CCA sequence in tRNAs without using a nucleic acid template. Adds these three nucleotides in the order of C, C, and A to the tRNA nucleotide-73, using CTP and ATP as substrates and producing inorganic pyrophosphate. tRNA 3'-terminal CCA addition is required both for tRNA processing and repair. Also involved in tRNA surveillance by mediating tandem CCA addition to generate a CCACCA at the 3' terminus of unstable tRNAs. While stable tRNAs receive only 3'-terminal CCA, unstable tRNAs are marked with CCACCA and rapidly degraded. The polypeptide is Multifunctional CCA protein (Vibrio parahaemolyticus serotype O3:K6 (strain RIMD 2210633)).